The following is a 256-amino-acid chain: Tryptophan synthase alpha chain (256 aa).

Catalysis depends on proton acceptor residues Glu51 and Asp62.

It belongs to the TrpA family. As to quaternary structure, tetramer of two alpha and two beta chains.

The enzyme catalyses (1S,2R)-1-C-(indol-3-yl)glycerol 3-phosphate + L-serine = D-glyceraldehyde 3-phosphate + L-tryptophan + H2O. It participates in amino-acid biosynthesis; L-tryptophan biosynthesis; L-tryptophan from chorismate: step 5/5. Its function is as follows. The alpha subunit is responsible for the aldol cleavage of indoleglycerol phosphate to indole and glyceraldehyde 3-phosphate. The protein is Tryptophan synthase alpha chain of Solidesulfovibrio magneticus (strain ATCC 700980 / DSM 13731 / RS-1) (Desulfovibrio magneticus).